A 227-amino-acid polypeptide reads, in one-letter code: Orotate phosphoribosyltransferase (227 aa).

K26 is a binding site for 5-phospho-alpha-D-ribose 1-diphosphate. F34–F35 is an orotate binding site. 5-phospho-alpha-D-ribose 1-diphosphate contacts are provided by residues Y72–K73, R98, K99, K102, H104, and D123–S131. 2 residues coordinate orotate: S127 and R155.

This sequence belongs to the purine/pyrimidine phosphoribosyltransferase family. PyrE subfamily. In terms of assembly, homodimer. The cofactor is Mg(2+).

It carries out the reaction orotidine 5'-phosphate + diphosphate = orotate + 5-phospho-alpha-D-ribose 1-diphosphate. Its pathway is pyrimidine metabolism; UMP biosynthesis via de novo pathway; UMP from orotate: step 1/2. In terms of biological role, catalyzes the transfer of a ribosyl phosphate group from 5-phosphoribose 1-diphosphate to orotate, leading to the formation of orotidine monophosphate (OMP). This is Orotate phosphoribosyltransferase from Nitrosomonas europaea (strain ATCC 19718 / CIP 103999 / KCTC 2705 / NBRC 14298).